Reading from the N-terminus, the 526-residue chain is ATP synthase subunit alpha (526 aa).

171 to 178 is a binding site for ATP; sequence GDRQTGKT.

It belongs to the ATPase alpha/beta chains family. As to quaternary structure, F-type ATPases have 2 components, CF(1) - the catalytic core - and CF(0) - the membrane proton channel. CF(1) has five subunits: alpha(3), beta(3), gamma(1), delta(1), epsilon(1). CF(0) has four main subunits: a(1), b(1), b'(1) and c(9-12).

Its subcellular location is the cell inner membrane. It catalyses the reaction ATP + H2O + 4 H(+)(in) = ADP + phosphate + 5 H(+)(out). Produces ATP from ADP in the presence of a proton gradient across the membrane. The alpha chain is a regulatory subunit. In Chlorobium phaeovibrioides (strain DSM 265 / 1930) (Prosthecochloris vibrioformis (strain DSM 265)), this protein is ATP synthase subunit alpha.